The sequence spans 882 residues: Alanine--tRNA ligase (882 aa).

4 residues coordinate Zn(2+): His-576, His-580, Cys-678, and His-682.

This sequence belongs to the class-II aminoacyl-tRNA synthetase family. The cofactor is Zn(2+).

The protein resides in the cytoplasm. It carries out the reaction tRNA(Ala) + L-alanine + ATP = L-alanyl-tRNA(Ala) + AMP + diphosphate. Functionally, catalyzes the attachment of alanine to tRNA(Ala) in a two-step reaction: alanine is first activated by ATP to form Ala-AMP and then transferred to the acceptor end of tRNA(Ala). Also edits incorrectly charged Ser-tRNA(Ala) and Gly-tRNA(Ala) via its editing domain. The polypeptide is Alanine--tRNA ligase (Anaplasma marginale (strain St. Maries)).